Reading from the N-terminus, the 442-residue chain is Tubulin beta chain (442 aa).

GTP-binding residues include Gln-11, Glu-69, Ser-138, Gly-142, Thr-143, Gly-144, Asn-204, and Asn-226. Position 69 (Glu-69) interacts with Mg(2+).

It belongs to the tubulin family. Dimer of alpha and beta chains. A typical microtubule is a hollow water-filled tube with an outer diameter of 25 nm and an inner diameter of 15 nM. Alpha-beta heterodimers associate head-to-tail to form protofilaments running lengthwise along the microtubule wall with the beta-tubulin subunit facing the microtubule plus end conferring a structural polarity. Microtubules usually have 13 protofilaments but different protofilament numbers can be found in some organisms and specialized cells. It depends on Mg(2+) as a cofactor.

The protein localises to the cytoplasm. It is found in the cytoskeleton. Functionally, tubulin is the major constituent of microtubules, a cylinder consisting of laterally associated linear protofilaments composed of alpha- and beta-tubulin heterodimers. Microtubules grow by the addition of GTP-tubulin dimers to the microtubule end, where a stabilizing cap forms. Below the cap, tubulin dimers are in GDP-bound state, owing to GTPase activity of alpha-tubulin. This is Tubulin beta chain (bPT2) from Paramecium tetraurelia.